Reading from the N-terminus, the 83-residue chain is uncharacterized protein (83 aa).

3 helical membrane passes run 4-24, 32-52, and 54-74; these read AILS…GVLM, IGNI…LKAF, and YYDL…IIIG.

The protein resides in the cell membrane. This is an uncharacterized protein from Methanocaldococcus jannaschii (strain ATCC 43067 / DSM 2661 / JAL-1 / JCM 10045 / NBRC 100440) (Methanococcus jannaschii).